A 948-amino-acid chain; its full sequence is Probable disease resistance protein At5g47260 (948 aa).

Residues 20 to 57 (RKYLYNLERNLEALHKVMQDLNAMRNDLLKRLSKEEEI) are a coiled coil. Residues 134-432 (HRALPPLVIK…CEGILAKEDR (299 aa)) form the NB-ARC domain. 176–183 (GRGGVGKT) contacts ATP. LRR repeat units lie at residues 498–519 (MIRRMSVTSTQIQNISDSPQCS), 520–542 (ELTTLVFRRNRHLKWISGAFFQW), 545–567 (GLVVLDLSFNRELAELPEEVSSL), 569–591 (LLRFLNLSWTCIKGLPLGLKELK), 592–614 (SLIHLDLDYTSNLQEVDVIASLL), 615–636 (NLQVLRLFHSVSMDLKLMEDIQ), 640–661 (SLKELSLTVRGSSVLQRLLSIQ), 666–686 (SIRRLHLTETTIVDGGILSLN), and 690–711 (SLCELDILGCNILEITIDWRCT).

It belongs to the disease resistance NB-LRR family.

In terms of biological role, potential disease resistance protein. This Arabidopsis thaliana (Mouse-ear cress) protein is Probable disease resistance protein At5g47260.